The sequence spans 236 residues: Small ribosomal subunit protein uS2c (236 aa).

The protein belongs to the universal ribosomal protein uS2 family.

The protein localises to the plastid. The protein resides in the chloroplast. The polypeptide is Small ribosomal subunit protein uS2c (rps2) (Lemna minor (Common duckweed)).